A 780-amino-acid polypeptide reads, in one-letter code: Ribonucleoside-diphosphate reductase large subunit (780 aa).

Substrate-binding positions include Thr-177, 192–193 (SC), Gly-223, 393–397 (NLCAE), and 595–599 (PTVGS). Cys-193 and Cys-409 are oxidised to a cystine. The active-site Proton acceptor is Asn-393. Cys-395 functions as the Cysteine radical intermediate in the catalytic mechanism. Residue Glu-397 is the Proton acceptor of the active site.

The protein belongs to the ribonucleoside diphosphate reductase large chain family. In terms of assembly, heterotetramer composed of a homodimer of the large subunit (R1) and a homodimer of the small subunit (R2). Larger multisubunit protein complex are also active, composed of (R1)n(R2)n.

It catalyses the reaction a 2'-deoxyribonucleoside 5'-diphosphate + [thioredoxin]-disulfide + H2O = a ribonucleoside 5'-diphosphate + [thioredoxin]-dithiol. In terms of biological role, ribonucleoside-diphosphate reductase holoenzyme provides the precursors necessary for viral DNA synthesis. Allows virus growth in non-dividing cells, as well as reactivation from latency in infected hosts. Catalyzes the biosynthesis of deoxyribonucleotides from the corresponding ribonucleotides. The protein is Ribonucleoside-diphosphate reductase large subunit of Connochaetes taurinus (Blue wildebeest).